We begin with the raw amino-acid sequence, 461 residues long: Cysteine--tRNA ligase (461 aa).

Cys28 lines the Zn(2+) pocket. Positions 30–40 (ITVYDLCHIGH) match the 'HIGH' region motif. Residues Cys209, His234, and Glu238 each coordinate Zn(2+). A 'KMSKS' region motif is present at residues 266–270 (KMSKS). An ATP-binding site is contributed by Lys269.

This sequence belongs to the class-I aminoacyl-tRNA synthetase family. Monomer. Requires Zn(2+) as cofactor.

It is found in the cytoplasm. The enzyme catalyses tRNA(Cys) + L-cysteine + ATP = L-cysteinyl-tRNA(Cys) + AMP + diphosphate. This Klebsiella pneumoniae (strain 342) protein is Cysteine--tRNA ligase.